The chain runs to 216 residues: CRIB domain-containing protein RIC7 (216 aa).

Residues isoleucine 36–glycine 49 form the CRIB domain. The segment at glycine 52 to phenylalanine 216 is disordered. Over residues serine 108–aspartate 121 the composition is skewed to basic and acidic residues.

Interacts with ARAC4/ROP2 and ARAC11/ROP1. As to expression, expressed in roots, leaves, guard cells, stems, flowers, siliques and pollen.

The protein localises to the nucleus. It localises to the cytoplasm. The protein resides in the cell membrane. In terms of biological role, functions as a downstream effector of Rho-related GTP binding proteins of the 'Rho of Plants' (ROPs) family. Participates in the propagation of ROP GTPase signals in specific cellular responses. Functions as a downstream effector of active ARAC4/ROP2 GTPase which is involved in the prevention of excessive stomatal opening upon light stimulation. Is involved in pollen tube growth regulation through its interaction with ARAC11/ROP1. The sequence is that of CRIB domain-containing protein RIC7 (RIC7) from Arabidopsis thaliana (Mouse-ear cress).